A 268-amino-acid polypeptide reads, in one-letter code: Ribosomal RNA small subunit methyltransferase A (268 aa).

The S-adenosyl-L-methionine site is built by asparagine 16, leucine 18, glycine 43, glutamate 64, aspartate 89, and asparagine 110.

Belongs to the class I-like SAM-binding methyltransferase superfamily. rRNA adenine N(6)-methyltransferase family. RsmA subfamily.

It is found in the cytoplasm. The catalysed reaction is adenosine(1518)/adenosine(1519) in 16S rRNA + 4 S-adenosyl-L-methionine = N(6)-dimethyladenosine(1518)/N(6)-dimethyladenosine(1519) in 16S rRNA + 4 S-adenosyl-L-homocysteine + 4 H(+). Its function is as follows. Specifically dimethylates two adjacent adenosines (A1518 and A1519) in the loop of a conserved hairpin near the 3'-end of 16S rRNA in the 30S particle. May play a critical role in biogenesis of 30S subunits. This chain is Ribosomal RNA small subunit methyltransferase A, found in Pseudomonas savastanoi pv. phaseolicola (strain 1448A / Race 6) (Pseudomonas syringae pv. phaseolicola (strain 1448A / Race 6)).